We begin with the raw amino-acid sequence, 329 residues long: Calcium homeostasis modulator protein (329 aa).

The Cytoplasmic portion of the chain corresponds to 1–14 (MTTSINSVVTVFQN). A helical membrane pass occupies residues 15-35 (VFTNHGSTLLNGILIATTVGG). At 36–53 (QSLVRKLTFSCPCAYPLN) the chain is on the extracellular side. The chain crosses the membrane as a helical span at residues 54-74 (IYHSLVFMFGPTAALLLIGIT). Over 75-103 (VNSTTWKLAHGFFFRVRDTRHSWKTTCVS) the chain is Cytoplasmic. Residues 104–124 (WIEVLIQSSVAPIAWLFVVFL) traverse the membrane as a helical segment. Topologically, residues 125–191 (DGGYYRCYRS…DASYLEAESQ (67 aa)) are extracellular. An N-linked (GlcNAc...) asparagine glycan is attached at N148. A helical transmembrane segment spans residues 192–212 (IYAWGLLLFSGVAAFLVITCN). At 213–329 (RMCDKYTLVQ…QIIVDETKED (117 aa)) the chain is on the cytoplasmic side.

It belongs to the CALHM family. In terms of tissue distribution, expressed in head and body wall muscles, IL2, ASG, ASI, ASJ, PHA and PHB sensory neurons, and spermatheca.

It is found in the cell membrane. Pore-forming subunit of a voltage-gated ion channel. Permeable to monovalent cations, divalent cations and anions with selectivity Ca(2+) &gt; Mg(2+) &gt; Na(+) = K(+) &gt; Cl(-). Acts both as a voltage-gated and calcium-activated ion channel. Required for normal locomotion. This Caenorhabditis elegans protein is Calcium homeostasis modulator protein.